The primary structure comprises 597 residues: Pentatricopeptide repeat-containing protein At2g21090 (597 aa).

PPR repeat units lie at residues 45 to 79 (PFDL…GFKR), 81 to 111 (NTLL…MHLR), 112 to 142 (NLYS…MPER), 143 to 177 (DVVS…GIKF), 178 to 212 (NEFS…GFLS), 213 to 243 (NVVL…MTVK), 244 to 274 (DIHI…MPEK), 275 to 309 (NPVS…GVKP), 310 to 344 (EQFT…NVRP), 345 to 375 (NAIV…CDDK), 377 to 411 (DCVF…RVQP), 412 to 447 (NRTT…GIVP), and 448 to 478 (DQEH…MPFE). The tract at residues 483–558 (IWNAILGVCR…EKAVSWIEIE (76 aa)) is type E motif. Positions 559-591 (KKVEAFTVSDGSHAHARKEEIYFILHNLAAVIE) are type E(+) motif.

This sequence belongs to the PPR family. PCMP-E subfamily.

In Arabidopsis thaliana (Mouse-ear cress), this protein is Pentatricopeptide repeat-containing protein At2g21090 (PCMP-E48).